The following is a 794-amino-acid chain: Glutamine--tRNA ligase (794 aa).

The disordered stretch occupies residues 192 to 217 (DNEKPKKKKEKPAKVEDKAAPVATSE). The 'HIGH' region signature appears at 277 to 287 (PEPNGYLHIGH). Residues 278–280 (EPN) and 284–290 (HIGHAKA) each bind ATP. 2 residues coordinate L-glutamine: aspartate 310 and tyrosine 450. ATP contacts are provided by residues threonine 469, 498–499 (RL), and 506–508 (MSK). Residues 505–509 (VMSKR) carry the 'KMSKS' region motif.

It belongs to the class-I aminoacyl-tRNA synthetase family.

It catalyses the reaction tRNA(Gln) + L-glutamine + ATP = L-glutaminyl-tRNA(Gln) + AMP + diphosphate. In Lupinus luteus (European yellow lupine), this protein is Glutamine--tRNA ligase.